The chain runs to 83 residues: Gas vesicle protein G1 (83 aa).

This sequence belongs to the gas vesicle GvpG family. GvpF to GvpM interact with each other in vitro, and may form multi-subunit complex(es). Might interact with GvpA1.

Its subcellular location is the gas vesicle. Proteins GvpF to GvpM might be involved in nucleating gas vesicle formation. A minor component of the gas vesicle. Gas vesicles are hollow, gas filled proteinaceous nanostructures found in several microbial planktonic microorganisms. They allow positioning of halobacteria at the optimal depth for growth in the poorly aerated, shallow brine pools of their habitat. Its function is as follows. Expression of a 9.5 kb p-vac DNA fragment containing 2 divergently transcribed regions (gvpD-gvpE-gvpF-gvpG-gvpH-gvpI-gvpJ-gvpK-gvpL-gvpM and gvpA-gvpC-gvpN-gvpO) allows H.volcanii to produce gas vesicles. A minimal gas vesicle can be made in H.volcanii by gvpA1-gvpO1 plus gvpF1-gvpG1-gvpJ1-gvpK1-gvpL1-gvpM1; lack of enough GvpJ1 prevents formation. A similar region restores gas vesicle production in H.halobium without the p-vac locus, but it still has the c-vac locus. This Halobacterium salinarum (strain ATCC 700922 / JCM 11081 / NRC-1) (Halobacterium halobium) protein is Gas vesicle protein G1 (gvpG11).